We begin with the raw amino-acid sequence, 489 residues long: Homoserine O-acetyltransferase (489 aa).

The region spanning 69–438 (LLLCHALSGS…AEGHDGFLLE (370 aa)) is the AB hydrolase-1 domain. Ser163 functions as the Nucleophile in the catalytic mechanism. Residues 255–329 (ASRHPYPDRL…QTTDSSSLNQ (75 aa)) form a disordered region. The segment covering 280 to 290 (EGNRNRRERPC) has biased composition (basic and acidic residues). Residues 299–329 (SESALNSPASSVSSLPSLGASQTTDSSSLNQ) are compositionally biased toward low complexity. Catalysis depends on residues Asp403 and His432.

This sequence belongs to the AB hydrolase superfamily. MetX family.

Its subcellular location is the cytoplasm. It catalyses the reaction L-homoserine + acetyl-CoA = O-acetyl-L-homoserine + CoA. It functions in the pathway amino-acid biosynthesis; L-methionine biosynthesis via de novo pathway; O-acetyl-L-homoserine from L-homoserine: step 1/1. Commits homoserine to the methionine biosynthesis pathway by catalyzing its O-acetylation. The chain is Homoserine O-acetyltransferase (met6) from Schizosaccharomyces pombe (strain 972 / ATCC 24843) (Fission yeast).